We begin with the raw amino-acid sequence, 172 residues long: Large ribosomal subunit protein uL10 (172 aa).

This sequence belongs to the universal ribosomal protein uL10 family. Part of the ribosomal stalk of the 50S ribosomal subunit. The N-terminus interacts with L11 and the large rRNA to form the base of the stalk. The C-terminus forms an elongated spine to which L12 dimers bind in a sequential fashion forming a multimeric L10(L12)X complex.

Functionally, forms part of the ribosomal stalk, playing a central role in the interaction of the ribosome with GTP-bound translation factors. This chain is Large ribosomal subunit protein uL10, found in Dinoroseobacter shibae (strain DSM 16493 / NCIMB 14021 / DFL 12).